The chain runs to 93 residues: Putative septation protein SpoVG (93 aa).

This sequence belongs to the SpoVG family.

Its function is as follows. Could be involved in septation. The chain is Putative septation protein SpoVG from Alkaliphilus oremlandii (strain OhILAs) (Clostridium oremlandii (strain OhILAs)).